The chain runs to 289 residues: CCR4-associated factor 16 (289 aa).

In terms of domain architecture, ABC transporter spans 7–249 (IEVRNLTYKF…SEVVNAKVNG (243 aa)). 41–48 (GANGAGKS) serves as a coordination point for ATP.

The protein belongs to the ABC transporter superfamily. In terms of assembly, interacts with CCR4 and SSN2.

The protein resides in the cytoplasm. The protein localises to the nucleus. The sequence is that of CCR4-associated factor 16 (CAF16) from Saccharomyces cerevisiae (strain ATCC 204508 / S288c) (Baker's yeast).